Reading from the N-terminus, the 356-residue chain is MSKIIDIKTSIIKIPLKRTFITAVRSTNHIDSLAVELTLDNGVKGYGVAPATTAITGDTLQGMQYIIREIFAPVILGSDLSDYKQTLELAFKKVMFNSAAKMAIDLAYHDLLAKEQDISVAKLLGAKANSIVTDVSISCGNVAETIQNIQNGVEANFTAIKVKTGADFNRDIQLLKALDNEFSKNIKFRFDANQGWNLAQTKQFIEEINKYSLNVEIIEQPVKYYDIKAMAEITKFSNIPVVADESVFDAKDAERVIDEQACNMINIKLAKTGGILEAQKIKKLADSAGISCMVGCMMESPAGILATASFALAEDITVADLDPLDWVAKDLYSDYITFNEPNIILKDNLKGFGFNL.

Substrate-binding positions include Arg-25, Ser-136, and 161-163; that span reads KVK. Asp-191 contacts Mg(2+). Asn-193 contributes to the substrate binding site. Positions 219 and 244 each coordinate Mg(2+). Residues Lys-268, 296-298, and 320-322 each bind substrate; these read CMM and DLD.

This sequence belongs to the mandelate racemase/muconate lactonizing enzyme family. Mg(2+) serves as cofactor.

In terms of biological role, catalyzes the epimerization of dipeptides with L-Glu in the second position. Has epimerase activity with L-Ala-L-Glu, L-Pro-L-Glu, L-Val-L-Glu, L-Thr-L-Glu and L-Met-L-Glu (in vitro). This chain is L-amino acid-D/L-Glu epimerase, found in Francisella philomiragia subsp. philomiragia (strain ATCC 25017 / CCUG 19701 / FSC 153 / O#319-036).